We begin with the raw amino-acid sequence, 267 residues long: Small ribosomal subunit protein uS2 (267 aa).

Basic and acidic residues predominate over residues Arg-233 to Gly-250. Residues Arg-233–Ala-267 form a disordered region. Positions Glu-251–Val-261 are enriched in low complexity.

This sequence belongs to the universal ribosomal protein uS2 family.

The chain is Small ribosomal subunit protein uS2 from Syntrophotalea carbinolica (strain DSM 2380 / NBRC 103641 / GraBd1) (Pelobacter carbinolicus).